The primary structure comprises 301 residues: Olfactory receptor 10AG1 (301 aa).

The Extracellular portion of the chain corresponds to 1-16 (MEFVLLGFSDIPNLHW). Residues 17–37 (MLFSIFLLMYLMILMCNGIII) form a helical membrane-spanning segment. Over 38 to 45 (LLIKIHPA) the chain is Cytoplasmic. A helical membrane pass occupies residues 46 to 66 (LQTPMYFFLSNFSLLEICYVT). Over 67–90 (IIIPRMLMDIWTQKGNISLFACAT) the chain is Extracellular. The N-linked (GlcNAc...) asparagine glycan is linked to N82. C88 and C180 are oxidised to a cystine. Residues 91-111 (QMCFFLMLGGTECLLLTVMAY) form a helical membrane-spanning segment. At 112–130 (DRYVAICKPLQYPLVMNHK) the chain is on the cytoplasmic side. Residues 131 to 151 (VCIQLIIASWTITIPVVIGET) traverse the membrane as a helical segment. Residues 152-188 (CQIFLLPFCGTNTINHFFCDIPPILKLACGNIFVNEI) lie on the Extracellular side of the membrane. The chain crosses the membrane as a helical span at residues 189–208 (TVHVVAVVFITVPFLLIVVS). At 209-228 (YGKIISNILKLSSARGKAKA) the chain is on the cytoplasmic side. The chain crosses the membrane as a helical span at residues 229–249 (FSTCSSHLIVVILFFGAGTIT). Over 250–262 (YLQPKPHQFQRMG) the chain is Extracellular. The helical transmembrane segment at 263–283 (KLISLFYTILIPTLNPIIYTL) threads the bilayer. At 284 to 301 (RNKDIMVALRKLLAKLLT) the chain is on the cytoplasmic side.

It belongs to the G-protein coupled receptor 1 family.

Its subcellular location is the cell membrane. Odorant receptor. The sequence is that of Olfactory receptor 10AG1 (OR10AG1) from Homo sapiens (Human).